Reading from the N-terminus, the 21-residue chain is Bradykinin-potentiating peptide K12 (21 aa).

A disordered region spans residues 1 to 21; the sequence is LRDYANRVINGGPVEAAGPPA.

Expressed by the venom gland.

Its subcellular location is the secreted. Functionally, inhibits angiotensin-converting enzyme (ACE), but does not serve as substrate for the enzyme. Potentiate bradykinin (BK) on the isolated guinea pig ileum as well as the isolated rat uterus for contraction. Also potentiates in vivo the depressor effect of BK on arterial blood pressure in the normotensive anesthetized rat. Intracerebroventricular injection into mice does not show toxic activity. The chain is Bradykinin-potentiating peptide K12 from Buthus occitanus (Common European scorpion).